Here is a 506-residue protein sequence, read N- to C-terminus: GMP synthase [glutamine-hydrolyzing] (506 aa).

Positions 4–192 (KLIILDFGSQ…FLDICGMKRD (189 aa)) constitute a Glutamine amidotransferase type-1 domain. Catalysis depends on cysteine 79, which acts as the Nucleophile. Catalysis depends on residues histidine 167 and glutamate 169. The 189-residue stretch at 193–381 (WTPASFIEAT…LGMMPHLIHR (189 aa)) folds into the GMPS ATP-PPase domain. ATP is bound at residue 220 to 226 (SGGVDSS).

Homodimer.

It catalyses the reaction XMP + L-glutamine + ATP + H2O = GMP + L-glutamate + AMP + diphosphate + 2 H(+). It participates in purine metabolism; GMP biosynthesis; GMP from XMP (L-Gln route): step 1/1. In terms of biological role, catalyzes the synthesis of GMP from XMP. This chain is GMP synthase [glutamine-hydrolyzing], found in Porphyromonas gingivalis (strain ATCC 33277 / DSM 20709 / CIP 103683 / JCM 12257 / NCTC 11834 / 2561).